Reading from the N-terminus, the 514-residue chain is DNA-(apurinic or apyrimidinic site) endonuclease 2 (514 aa).

Residues N8 and E48 each contribute to the Mg(2+) site. The active site involves Y156. Mg(2+) contacts are provided by D197, N199, D303, and H304. The Proton donor/acceptor role is filled by D197. The Proton acceptor role is filled by H304. Residues 359-417 (PSNQTQVHMRKNKARVRSTRSRPSKTGSSRGQKNLMSYFQPSSSGPQTSNLDLPSLGTL) are disordered. The segment covering 366–381 (HMRKNKARVRSTRSRP) has biased composition (basic residues). K371 is covalently cross-linked (Glycyl lysine isopeptide (Lys-Gly) (interchain with G-Cter in ubiquitin)). Polar residues predominate over residues 382 to 410 (SKTGSSRGQKNLMSYFQPSSSGPQTSNLD). Residues 390–397 (QKNLMSYF) form a required for the interaction and colocalization with PCNA in nuclear foci in presence of oxidative-induced DNA damaging agents region. C465, H468, C491, and C505 together coordinate Zn(2+). The segment at 465–514 (CGGHREPCVMRTVKKPGPNLGRHFYMCARPQGPPTDPSSRCNFFLWSRPS) adopts a GRF-type zinc-finger fold.

Belongs to the DNA repair enzymes AP/ExoA family. Interacts with PCNA; this interaction is triggered by reactive oxygen species and increased by misincorporation of uracil in nuclear DNA. It depends on Mg(2+) as a cofactor. The cofactor is Mn(2+). In terms of processing, ubiquitinated by the CUL9-RBX1 complex. Ubiquitinated by MKRN3 at Lys-371 leading to proteasomal degradation.

Its subcellular location is the nucleus. It localises to the cytoplasm. The protein localises to the mitochondrion. The enzyme catalyses Exonucleolytic cleavage in the 3'- to 5'-direction to yield nucleoside 5'-phosphates.. 3'-5' exonuclease activity is activated by sodium and manganese. 3'-5' exonuclease and 3'-phosphodiesterase activities are stimulated in presence of PCNA. Functionally, functions as a weak apurinic/apyrimidinic (AP) endodeoxyribonuclease in the DNA base excision repair (BER) pathway of DNA lesions induced by oxidative and alkylating agents. Initiates repair of AP sites in DNA by catalyzing hydrolytic incision of the phosphodiester backbone immediately adjacent to the damage, generating a single-strand break with 5'-deoxyribose phosphate and 3'-hydroxyl ends. Also displays double-stranded DNA 3'-5' exonuclease, 3'-phosphodiesterase activities. Shows robust 3'-5' exonuclease activity on 3'-recessed heteroduplex DNA and is able to remove mismatched nucleotides preferentially. Shows fairly strong 3'-phosphodiesterase activity involved in the removal of 3'-damaged termini formed in DNA by oxidative agents. In the nucleus functions in the PCNA-dependent BER pathway. Plays a role in reversing blocked 3' DNA ends, problematic lesions that preclude DNA synthesis. Required for somatic hypermutation (SHM) and DNA cleavage step of class switch recombination (CSR) of immunoglobulin genes. Required for proper cell cycle progression during proliferation of peripheral lymphocytes. This Bos taurus (Bovine) protein is DNA-(apurinic or apyrimidinic site) endonuclease 2 (APEX2).